A 289-amino-acid chain; its full sequence is ADP-dependent (S)-NAD(P)H-hydrate dehydratase (289 aa).

Residues 9–286 (VTAAALRAQP…PEVPGILDRL (278 aa)) enclose the YjeF C-terminal domain. Residues alanine 44 and histidine 160 each coordinate (6S)-NADPHX. Residues 197–201 (KGADS) and glycine 226 contribute to the AMP site. Aspartate 227 serves as a coordination point for (6S)-NADPHX.

This sequence belongs to the NnrD/CARKD family. As to quaternary structure, homotetramer. Mg(2+) serves as cofactor.

The enzyme catalyses (6S)-NADHX + ADP = AMP + phosphate + NADH + H(+). It carries out the reaction (6S)-NADPHX + ADP = AMP + phosphate + NADPH + H(+). In terms of biological role, catalyzes the dehydration of the S-form of NAD(P)HX at the expense of ADP, which is converted to AMP. Together with NAD(P)HX epimerase, which catalyzes the epimerization of the S- and R-forms, the enzyme allows the repair of both epimers of NAD(P)HX, a damaged form of NAD(P)H that is a result of enzymatic or heat-dependent hydration. The protein is ADP-dependent (S)-NAD(P)H-hydrate dehydratase of Xanthomonas campestris pv. campestris (strain ATCC 33913 / DSM 3586 / NCPPB 528 / LMG 568 / P 25).